The primary structure comprises 959 residues: Protovillin (959 aa).

Positions 1 to 53 (MEPPLELPTQRKRVIPSKFGILKRNAEIEAEKNRENLQQSSCFSHINEIGKEI) are tail. The segment at 54-832 (GLEIWKIIDD…PIMLPTSGVT (779 aa)) is core. 6 Gelsolin-like repeats span residues 64–116 (STIQ…SQET), 204–244 (IRVK…LEKG), 309–366 (IKLY…DQRT), 479–529 (RNKF…EDKG), 603–647 (INIH…KEAA), and 713–754 (FKVF…TEKL). A run of 2 repeats spans residues 840–849 (TPKPITTPTV) and 851–860 (TPKPITTPTV). Residues 840 to 860 (TPKPITTPTVTTPKPITTPTV) are 2 X 10 AA repeats of T-P-K-P-I-T-T-P-T-V. The region spanning 895–959 (TTITTFYPLS…KQLRVDNGLF (65 aa)) is the HP domain.

Belongs to the villin/gelsolin family.

It is found in the cytoplasm. The protein resides in the cytoskeleton. Functionally, caps actin filaments but displays neither severing nor cross-linking nor nucleating activities. Protovillin seems to be a villin precursor with only archaic capping activity. It lacks essential changes in the sequence to allow bundling of actin filaments and consequently the appearance of microvilli. This Dictyostelium discoideum (Social amoeba) protein is Protovillin (vilB).